The sequence spans 1187 residues: Phospholipid-transporting ATPase IH (1187 aa).

Topologically, residues 1–61 (MDCSLLRTLV…SSKYTFWNFI (61 aa)) are cytoplasmic. Residues 62-82 (PKNLFEQFRRIANFYFLIIFL) form a helical membrane-spanning segment. The Extracellular segment spans residues 83-88 (VQLIID). A helical membrane pass occupies residues 89–110 (TPTSPVTSGLPLFFVITVTAIK). Topologically, residues 111-296 (QGYEDWLRHK…SAVEKSMNTF (186 aa)) are cytoplasmic. A helical membrane pass occupies residues 297-318 (LIVYLCILVSKALINTVLKYVW). The Extracellular portion of the chain corresponds to 319–349 (QSEPFRDEPWYNEKTESERQRNLFLRAFTDF). Residues 350 to 372 (LAFMVLFNYIIPVSMYVTVEMQK) traverse the membrane as a helical segment. The Cytoplasmic portion of the chain corresponds to 373–884 (FLGSYFITWD…GHFYYIRISE (512 aa)). Aspartate 414 functions as the 4-aspartylphosphate intermediate in the catalytic mechanism. 10 residues coordinate ATP: aspartate 414, lysine 415, threonine 416, glutamate 513, phenylalanine 555, lysine 578, arginine 609, threonine 689, glycine 690, and aspartate 691. Residue aspartate 414 participates in Mg(2+) binding. Threonine 416 is a Mg(2+) binding site. Position 740 is a phosphoserine (serine 740). ATP-binding residues include arginine 801 and lysine 807. Aspartate 828 lines the Mg(2+) pocket. Positions 831 and 832 each coordinate ATP. A Mg(2+)-binding site is contributed by aspartate 832. A helical membrane pass occupies residues 885–905 (LVQYFFYKNVCFIFPQFLYQF). The Extracellular portion of the chain corresponds to 906-917 (FCGFSQQTLYDT). Residues 918–937 (AYLTLYNISFTSLPILLYSL) form a helical membrane-spanning segment. Residues 938–967 (MEQHVGIDVLKRDPTLYRDIAKNALLRWRV) lie on the Cytoplasmic side of the membrane. The chain crosses the membrane as a helical span at residues 968–989 (FIYWTFLGVFDALVFFFGAYFI). Over 990–1003 (FENTTVTINGQMFG) the chain is Extracellular. The helical transmembrane segment at 1004 to 1026 (NWTFGTLVFTVMVLTVTLKLALD) threads the bilayer. At 1027 to 1032 (THYWTW) the chain is on the cytoplasmic side. A helical transmembrane segment spans residues 1033–1053 (INHFVIWGSLLFYIAFSLLWG). The Extracellular segment spans residues 1054–1071 (GVIWPFLSYQRMYYVFIS). Residues 1072–1096 (MLSSGPAWLGIILLVTVGLLPDVLK) form a helical membrane-spanning segment. At 1097–1138 (KVLCRQLWPTATERTQNIQHQDSISEFTPLASLPSWGAQGSR) the chain is on the cytoplasmic side. A phosphoserine mark is found at serine 1148 and serine 1158.

This sequence belongs to the cation transport ATPase (P-type) (TC 3.A.3) family. Type IV subfamily. As to quaternary structure, component of a P4-ATPase flippase complex which consists of a catalytic alpha subunit ATP11A and an accessory beta subunit TMEM30A. The cofactor is Mg(2+). Proteolytically cleaved by CASP3. As to expression, widely expressed. Expressed in myoblasts. Expressed in retina, brain, liver, testes and kidney (at protein level). Expressed in the inner ear.

The protein localises to the cell membrane. It is found in the early endosome. The protein resides in the recycling endosome. Its subcellular location is the endoplasmic reticulum membrane. It catalyses the reaction ATP + H2O + phospholipidSide 1 = ADP + phosphate + phospholipidSide 2.. The catalysed reaction is a 1,2-diacyl-sn-glycero-3-phospho-L-serine(out) + ATP + H2O = a 1,2-diacyl-sn-glycero-3-phospho-L-serine(in) + ADP + phosphate + H(+). The enzyme catalyses a 1,2-diacyl-sn-glycero-3-phosphoethanolamine(out) + ATP + H2O = a 1,2-diacyl-sn-glycero-3-phosphoethanolamine(in) + ADP + phosphate + H(+). In terms of biological role, catalytic component of a P4-ATPase flippase complex which catalyzes the hydrolysis of ATP coupled to the transport of aminophospholipids, phosphatidylserines (PS) and phosphatidylethanolamines (PE), from the outer to the inner leaflet of the plasma membrane. Does not show flippase activity toward phosphatidylcholine (PC). Contributes to the maintenance of membrane lipid asymmetry with a specific role in morphogenesis of muscle cells. In myoblasts, mediates PS enrichment at the inner leaflet of plasma membrane, triggering PIEZO1-dependent Ca2+ influx and Rho GTPases signal transduction, subsequently leading to the assembly of cortical actomyosin fibers and myotube formation. In Mus musculus (Mouse), this protein is Phospholipid-transporting ATPase IH (Atp11a).